The following is a 219-amino-acid chain: Large ribosomal subunit protein uL3 (219 aa).

This sequence belongs to the universal ribosomal protein uL3 family. In terms of assembly, part of the 50S ribosomal subunit. Forms a cluster with proteins L14 and L19.

One of the primary rRNA binding proteins, it binds directly near the 3'-end of the 23S rRNA, where it nucleates assembly of the 50S subunit. In Chlamydia pneumoniae (Chlamydophila pneumoniae), this protein is Large ribosomal subunit protein uL3.